A 254-amino-acid polypeptide reads, in one-letter code: 14-3-3-like protein GF14 epsilon (254 aa).

Phosphoserine is present on residues S65 and S188.

The protein belongs to the 14-3-3 family. In terms of assembly, interacts with DREB1A and DREB1B in the nucleus. Interacts with CINV1.

It is found in the nucleus. The protein localises to the cytoplasm. Functionally, is associated with a DNA binding complex that binds to the G box, a well-characterized cis-acting DNA regulatory element found in plant genes. This Arabidopsis thaliana (Mouse-ear cress) protein is 14-3-3-like protein GF14 epsilon (GRF10).